The chain runs to 287 residues: Protease HtpX (287 aa).

Helical transmembrane passes span 4–24 (IFLL…VMSI) and 33–53 (GGLL…SLAI). Position 139 (H139) interacts with Zn(2+). E140 is an active-site residue. Zn(2+) is bound at residue H143. Transmembrane regions (helical) follow at residues 154 to 174 (LIQG…ASII) and 195 to 215 (AVVF…VAYF). Position 220 (E220) interacts with Zn(2+).

This sequence belongs to the peptidase M48B family. Requires Zn(2+) as cofactor.

The protein localises to the cell inner membrane. This chain is Protease HtpX, found in Shewanella loihica (strain ATCC BAA-1088 / PV-4).